The primary structure comprises 348 residues: F(420)H(2) dehydrogenase subunit H (348 aa).

8 consecutive transmembrane segments (helical) span residues 20–40, 93–113, 127–147, 172–192, 198–218, 259–279, 286–306, and 328–348; these read GVVG…AVWL, IFMM…AVFI, ISVL…FMIA, PLGI…IVEI, LLWN…ALMA, ILGS…PAFV, GLIA…MTII, and LLPL…YLGA.

The protein belongs to the complex I subunit 1 family. The FPO complex is composed of at least 13 different subunits. FpoA, FpoH, FpoJ, FpoK, FpoL, FpoM and FpoN proteins constitute the membrane sector of the complex.

The protein localises to the cell membrane. It catalyses the reaction methanophenazine + reduced coenzyme F420-(gamma-L-Glu)(n) = dihydromethanophenazine + oxidized coenzyme F420-(gamma-L-Glu)(n) + H(+). Its function is as follows. Component of the F(420)H(2) dehydrogenase (FPO complex) which is part of the energy-conserving F(420)H(2):heterodisulfide oxidoreductase system. The membrane-bound electron transfer system of the complex plays an important role in the metabolism of methylotrophic methanogens when the organisms grow on methanol or methylamines. Catalyzes the oxidation of methanophenazine to dihydromethanophenazine. It shuttles electrons from F(420)H(2), via FAD and iron-sulfur (Fe-S) centers, to methanophenazine (an electron carrier in the membrane). It couples the redox reaction to proton translocation (for every two electrons transferred, two hydrogen ions are translocated across the cytoplasmic membrane), and thus conserves the redox energy in a proton gradient. This chain is F(420)H(2) dehydrogenase subunit H, found in Methanosarcina acetivorans (strain ATCC 35395 / DSM 2834 / JCM 12185 / C2A).